The sequence spans 359 residues: Malonyl-CoA reductase (359 aa).

An NADP(+)-binding site is contributed by 16–19 (TGLV). Catalysis depends on C153, which acts as the Acyl-thioester intermediate. 183–184 (SG) serves as a coordination point for NADP(+). The active-site Proton acceptor is the H248. NADP(+) is bound at residue 335–336 (NT).

Belongs to the aspartate-semialdehyde dehydrogenase family. As to quaternary structure, homodimer and possibly a tetramer. Mg(2+) is required as a cofactor. Requires Mn(2+) as cofactor.

It carries out the reaction 3-oxopropanoate + NADP(+) + CoA = malonyl-CoA + NADPH + H(+). With respect to regulation, activated by dithioerythritol (5 mM) and inhibited by the thiol-blocking agent iodoacetamide (0.1 mM). Functionally, catalyzes the reduction of malonyl-CoA to malonate semialdehyde, a key step in the 3-hydroxypropanoate and the 3-hydroxypropanoate/4-hydroxybutyrate cycles. Can also use succinyl-CoA and succinate semialdehyde as substrates but at a lower rate than malonyl-CoA. The polypeptide is Malonyl-CoA reductase (mcr) (Sulfurisphaera tokodaii (strain DSM 16993 / JCM 10545 / NBRC 100140 / 7) (Sulfolobus tokodaii)).